Consider the following 560-residue polypeptide: SWI/SNF complex subunit SWI3A homolog (560 aa).

Residues 1–13 (MSPPVAGAASSGD) show a composition bias toward low complexity. The tract at residues 1 to 22 (MSPPVAGAASSGDGPPGRPPRE) is disordered. Residues 24-127 (YTIPASSGWF…FSASPSRPEA (104 aa)) form the SWIRM domain. The 52-residue stretch at 242 to 293 (HSSSAWTDAETLLLLEGVLKHGDDWDLIAQHVRTKNKSECIARLIQLPFGEH) folds into the SANT domain. Residues 311–330 (TTDGKVNKSTVKESSSQPTE) are compositionally biased toward polar residues. Disordered regions lie at residues 311-352 (TTDG…EEHP) and 414-445 (QTRA…PDKK). The span at 331 to 342 (TVDDMQIDGNED) shows a compositional bias: acidic residues. Basic and acidic residues-rich tracts occupy residues 343–352 (GADKSVEEHP) and 424–445 (RQSD…PDKK).

As to quaternary structure, interacts with LFR.

Its subcellular location is the nucleus. Its function is as follows. Component of a multiprotein complex equivalent of the SWI/SNF complex, an ATP-dependent chromatin-remodeling complex, which is required for the positive and negative regulation of gene expression of a large number of genes. It changes chromatin structure by altering DNA-histone contacts within a nucleosome, leading eventually to a change in nucleosome position, thus facilitating or repressing binding of gene-specific transcription factors. The protein is SWI/SNF complex subunit SWI3A homolog of Oryza sativa subsp. japonica (Rice).